A 153-amino-acid polypeptide reads, in one-letter code: Ribosome maturation factor RimP (153 aa).

Belongs to the RimP family.

Its subcellular location is the cytoplasm. Required for maturation of 30S ribosomal subunits. In Actinobacillus pleuropneumoniae serotype 5b (strain L20), this protein is Ribosome maturation factor RimP.